A 282-amino-acid chain; its full sequence is uncharacterized protein (282 aa).

Helical transmembrane passes span 9-29, 43-63, 123-143, 158-178, and 232-252; these read LLKI…APHG, ISGR…FLYA, VFVS…LYLV, YIGM…DNIL, and LAAG…ILLM.

The protein belongs to the steroid 5-alpha reductase family.

Its subcellular location is the endoplasmic reticulum membrane. This is an uncharacterized protein from Schizosaccharomyces pombe (strain 972 / ATCC 24843) (Fission yeast).